A 311-amino-acid chain; its full sequence is Methionyl-tRNA formyltransferase (311 aa).

Residue S110–P113 coordinates (6S)-5,6,7,8-tetrahydrofolate.

Belongs to the Fmt family.

The catalysed reaction is L-methionyl-tRNA(fMet) + (6R)-10-formyltetrahydrofolate = N-formyl-L-methionyl-tRNA(fMet) + (6S)-5,6,7,8-tetrahydrofolate + H(+). Functionally, attaches a formyl group to the free amino group of methionyl-tRNA(fMet). The formyl group appears to play a dual role in the initiator identity of N-formylmethionyl-tRNA by promoting its recognition by IF2 and preventing the misappropriation of this tRNA by the elongation apparatus. This chain is Methionyl-tRNA formyltransferase, found in Streptococcus sanguinis (strain SK36).